The following is a 1034-amino-acid chain: Protein ITPRID1 (1034 aa).

Disordered stretches follow at residues 223–290 (KTQQ…PTKP), 442–486 (QVSS…KSMT), and 624–678 (QSSL…SSWS). Polar residues-rich tracts occupy residues 443–453 (VSSMTGSQSPT) and 465–476 (HSPASQQDSLQE). Residues 477-486 (SYGSKSKSMT) are compositionally biased toward low complexity. Residues 669–678 (TDSNAASSWS) show a composition bias toward polar residues. Residues 843–902 (EMETMKMVCQSFREHLEEIEQHFMGQQALYPRDMSEEEREEAEYLRTLREALRQQVAELA) adopt a coiled-coil conformation.

In Mus musculus (Mouse), this protein is Protein ITPRID1 (Itprid1).